The chain runs to 396 residues: Beta-1,3-N-acetylglucosaminyltransferase radical fringe (396 aa).

The Cytoplasmic portion of the chain corresponds to 1–6 (MNFSCL). The chain crosses the membrane as a helical; Signal-anchor for type II membrane protein span at residues 7–27 (GLSKICFLVSVIFCTFLLLFI). Residues 28–396 (PKTKTPWRPR…THWCPPRKTR (369 aa)) lie on the Lumenal side of the membrane. N-linked (GlcNAc...) asparagine glycans are attached at residues Asn-49 and Asn-120. Position 145 (Arg-145) interacts with substrate. Asn-184 is a glycosylation site (N-linked (GlcNAc...) asparagine). Intrachain disulfides connect Cys-185-Cys-196 and Cys-214-Cys-277. Residue Asp-218 coordinates substrate. Asp-219 lines the Mn(2+) pocket. Asp-307 is a catalytic residue. Position 331 (His-331) interacts with Mn(2+). The cysteines at positions 381 and 390 are disulfide-linked.

This sequence belongs to the glycosyltransferase 31 family. Requires Mn(2+) as cofactor. As to expression, detected in the mesanchymal region of the developing limb. Expressed in mesoderm but not in ectoderm with no evident boundary of expression.

The protein localises to the golgi apparatus membrane. It carries out the reaction 3-O-(alpha-L-fucosyl)-L-threonyl-[EGF-like domain protein] + UDP-N-acetyl-alpha-D-glucosamine = 3-O-(N-acetyl-beta-D-glucosaminyl-(1-&gt;3)-alpha-L-fucosyl)-L-threonyl-[EGF-like domain protein] + UDP + H(+). The enzyme catalyses 3-O-(alpha-L-fucosyl)-L-seryl-[EGF-like domain protein] + UDP-N-acetyl-alpha-D-glucosamine = 3-O-(N-acetyl-beta-D-glucosaminyl-(1-&gt;3)-alpha-L-fucosyl)-L-seryl-[EGF-like domain protein] + UDP + H(+). In terms of biological role, glycosyltransferase that initiates the elongation of O-linked fucose residues attached to EGF-like repeats in the extracellular domain of Notch molecules. Involved in forelimb development and in adult forelimb regeneration. In Notophthalmus viridescens (Eastern newt), this protein is Beta-1,3-N-acetylglucosaminyltransferase radical fringe (RFNG).